A 363-amino-acid polypeptide reads, in one-letter code: Autophagy-related protein 3 (363 aa).

Basic and acidic residues-rich tracts occupy residues 84–106 (DFAG…RGDG) and 129–138 (ARVRDVRTVD). The interval 84–171 (DFAGDAGHDE…DDEAIIRDPK (88 aa)) is flexible region. The disordered stretch occupies residues 84-174 (DFAGDAGHDE…AIIRDPKADN (91 aa)). The span at 139 to 164 (ESGEMGEREDDEDDIPDMEDDDDDDE) shows a compositional bias: acidic residues. Cys-247 serves as the catalytic Glycyl thioester intermediate. Residues 251–339 (SVMKTLLDRA…EEEVAIRVDQ (89 aa)) form a handle region region.

Belongs to the ATG3 family. Monomer. Interacts with atg8 through an intermediate thioester bond through the C-terminal Gly of atg8. Interacts with the C-terminal region of the E1-like atg7 enzyme. Also interacts with the atg12-atg5 conjugate.

Its subcellular location is the cytoplasm. Its function is as follows. E2 conjugating enzyme required for the cytoplasm to vacuole transport (Cvt) and autophagy. Required for selective autophagic degradation of the nucleus (nucleophagy) as well as for mitophagy which contributes to regulate mitochondrial quantity and quality by eliminating the mitochondria to a basal level to fulfill cellular energy requirements and preventing excess ROS production. Responsible for the E2-like covalent binding of phosphatidylethanolamine to the C-terminal Gly of atg8. The atg12-atg5 conjugate plays a role of an E3 and promotes the transfer of atg8 from atg3 to phosphatidylethanolamine (PE). This step is required for the membrane association of atg8. The formation of the atg8-phosphatidylethanolamine conjugate is essential for autophagy and for the cytoplasm to vacuole transport (Cvt). The atg8-PE conjugate mediates tethering between adjacent membranes and stimulates membrane hemifusion, leading to expansion of the autophagosomal membrane during autophagy. Required for normal mycelial growth and conidiogenesis, and regulates sclerotial formation. Plays an essential role in pathogenesis. The chain is Autophagy-related protein 3 from Botryotinia fuckeliana (strain BcDW1) (Noble rot fungus).